Here is a 250-residue protein sequence, read N- to C-terminus: Corrinoid adenosyltransferase MMAB (250 aa).

A mitochondrion-targeting transit peptide spans 1-32 (MAVCGLGSRLGLGSRLGLRGCFGAARLLYPRF). The disordered stretch occupies residues 34–59 (SRGPQGVEDGDRPQPSSKTPRIPKIY). ATP contacts are provided by residues 60–63 (TKTG), 68–69 (SS), and Lys78. Phosphoserine is present on Ser134. 190 to 194 (RRAER) is a binding site for ATP. At Lys211 the chain carries N6-succinyllysine. Asn214 serves as a coordination point for ATP. The residue at position 230 (Lys230) is an N6-acetyllysine; alternate. N6-succinyllysine; alternate is present on Lys230.

It belongs to the Cob(I)alamin adenosyltransferase family. As to quaternary structure, homotrimer. Expressed in liver and skeletal muscle.

The protein localises to the mitochondrion. It catalyses the reaction cob(I)alamin-[corrinoid adenosyltransferase] + ATP = apo-[corrinoid adenosyltransferase] + adenosylcob(III)alamin + triphosphate. In terms of biological role, converts cob(I)alamin to adenosylcobalamin (adenosylcob(III)alamin), a coenzyme for methylmalonyl-CoA mutase, therefore participates in the final step of the vitamin B12 conversion. Generates adenosylcobalamin (AdoCbl) and directly delivers the cofactor to MUT in a transfer that is stimulated by ATP-binding to MMAB and gated by MMAA. This is Corrinoid adenosyltransferase MMAB from Homo sapiens (Human).